A 386-amino-acid chain; its full sequence is 2-deoxy-scyllo-inosose synthase (386 aa).

NAD(+)-binding positions include Asp42, Glu73–Lys76, Gly105–Asn109, Thr129–Thr130, Ser140–Lys142, and Lys151–Asn152. The active site involves Lys142. Glu184 contacts Co(2+). Glu244 is a catalytic residue. Positions 247 and 263 each coordinate Co(2+).

Belongs to the sugar phosphate cyclases superfamily. DOI synthase family. The cofactor is NAD(+). It depends on Co(2+) as a cofactor.

The catalysed reaction is D-glucose 6-phosphate = 2-deoxy-L-scyllo-inosose + phosphate. The protein operates within metabolic intermediate biosynthesis; 2-deoxystreptamine biosynthesis; 2-deoxystreptamine from D-glucose 6-phosphate: step 1/4. It functions in the pathway antibiotic biosynthesis; paromomycin biosynthesis. Functionally, catalyzes the intramolecular carbocycle formation from D-glucose-6-phosphate to 2-deoxy-scyllo-inosose (DOI). In Streptomyces paromomycinus (Streptomyces rimosus subsp. paromomycinus), this protein is 2-deoxy-scyllo-inosose synthase (parC).